The primary structure comprises 185 residues: Peptidyl-tRNA hydrolase (185 aa).

Tyrosine 14 provides a ligand contact to tRNA. Histidine 19 acts as the Proton acceptor in catalysis. Residues tyrosine 64, asparagine 66, and asparagine 112 each coordinate tRNA.

This sequence belongs to the PTH family. As to quaternary structure, monomer.

It is found in the cytoplasm. The catalysed reaction is an N-acyl-L-alpha-aminoacyl-tRNA + H2O = an N-acyl-L-amino acid + a tRNA + H(+). In terms of biological role, hydrolyzes ribosome-free peptidyl-tRNAs (with 1 or more amino acids incorporated), which drop off the ribosome during protein synthesis, or as a result of ribosome stalling. Functionally, catalyzes the release of premature peptidyl moieties from peptidyl-tRNA molecules trapped in stalled 50S ribosomal subunits, and thus maintains levels of free tRNAs and 50S ribosomes. This chain is Peptidyl-tRNA hydrolase, found in Pediococcus pentosaceus (strain ATCC 25745 / CCUG 21536 / LMG 10740 / 183-1w).